The chain runs to 148 residues: IQ domain-containing protein F5 (148 aa).

2 consecutive IQ domains span residues 11-40 and 67-96; these read ETSAAVRIQAWWRGTLLRRTLLHAALSAWI and KTWAIVKLQSWFRMWHIRHRYCRLLNAVRI.

This Mus musculus (Mouse) protein is IQ domain-containing protein F5 (Iqcf5).